The sequence spans 860 residues: Leucine--tRNA ligase (860 aa).

The short motif at 42–52 (PYPSGRLHMGH) is the 'HIGH' region element. The 'KMSKS' region motif lies at 619–623 (KMSKS). Residue Lys-622 coordinates ATP.

It belongs to the class-I aminoacyl-tRNA synthetase family.

It localises to the cytoplasm. The enzyme catalyses tRNA(Leu) + L-leucine + ATP = L-leucyl-tRNA(Leu) + AMP + diphosphate. The chain is Leucine--tRNA ligase from Shigella sonnei (strain Ss046).